We begin with the raw amino-acid sequence, 425 residues long: Dihydroorotase (425 aa).

The Zn(2+) site is built by His-58 and His-60. Residues 60 to 62 (HFR) and Asn-92 contribute to the substrate site. Zn(2+) is bound by residues Asp-150, His-177, and His-230. Substrate is bound at residue Asn-276. Position 303 (Asp-303) interacts with Zn(2+). Asp-303 is a catalytic residue. Residues His-307 and 321–322 (FG) contribute to the substrate site.

Belongs to the metallo-dependent hydrolases superfamily. DHOase family. Class I DHOase subfamily. It depends on Zn(2+) as a cofactor.

It carries out the reaction (S)-dihydroorotate + H2O = N-carbamoyl-L-aspartate + H(+). The protein operates within pyrimidine metabolism; UMP biosynthesis via de novo pathway; (S)-dihydroorotate from bicarbonate: step 3/3. Its function is as follows. Catalyzes the reversible cyclization of carbamoyl aspartate to dihydroorotate. This is Dihydroorotase from Pediococcus pentosaceus (strain ATCC 25745 / CCUG 21536 / LMG 10740 / 183-1w).